A 165-amino-acid polypeptide reads, in one-letter code: Phosphopantetheine adenylyltransferase (165 aa).

Ser9 is a substrate binding site. Residues Ser9 to Phe10 and His17 contribute to the ATP site. Substrate is bound by residues Lys41, Val73, and Arg87. Residues Gly88–Arg90, Glu98, and Phe123–Ser129 each bind ATP.

Belongs to the bacterial CoaD family. In terms of assembly, homohexamer. The cofactor is Mg(2+).

It is found in the cytoplasm. The catalysed reaction is (R)-4'-phosphopantetheine + ATP + H(+) = 3'-dephospho-CoA + diphosphate. It participates in cofactor biosynthesis; coenzyme A biosynthesis; CoA from (R)-pantothenate: step 4/5. Functionally, reversibly transfers an adenylyl group from ATP to 4'-phosphopantetheine, yielding dephospho-CoA (dPCoA) and pyrophosphate. In Herpetosiphon aurantiacus (strain ATCC 23779 / DSM 785 / 114-95), this protein is Phosphopantetheine adenylyltransferase.